The sequence spans 269 residues: Putative biopolymer transport protein ExbD (269 aa).

Over 1–40 (MASSPKAPKSHRKFQSIYHPTRPLSLWQDNQHDQGEVRIE) the chain is Cytoplasmic. Residues 41 to 61 (IIPLIDVVFCILTFFILGAVG) traverse the membrane as a helical segment. Topologically, residues 62 to 269 (LSRQQAISLD…GNTVPSAPQQ (208 aa)) are periplasmic. The disordered stretch occupies residues 190–269 (NGANPGMSNF…GNTVPSAPQQ (80 aa)). The span at 193–204 (NPGMSNFNNSNP) shows a compositional bias: low complexity.

This sequence belongs to the ExbD/TolR family.

It localises to the cell inner membrane. The sequence is that of Putative biopolymer transport protein ExbD from Synechocystis sp. (strain ATCC 27184 / PCC 6803 / Kazusa).